The primary structure comprises 639 residues: 3-hydroxybenzoate 4-monooxygenase (639 aa).

FAD-binding positions include 34–64 (DVLI…IVEQ), Gln73, Val166, Asn212, 269–271 (RFY), Tyr317, Asp349, and Ser365.

This sequence belongs to the PheA/TfdB FAD monooxygenase family. As to quaternary structure, homodimer. FAD is required as a cofactor.

It catalyses the reaction 3-hydroxybenzoate + NADPH + O2 + H(+) = 3,4-dihydroxybenzoate + NADP(+) + H2O. In terms of biological role, converts 3-hydroxybenzoate (m-hydroxybenzoate), and to a lesser extent p-hydroxybenzoate, to 3,4-dihydroxybenzoate (protocatechuate). Also acts on a number of analogs of 3-hydroxybenzoate substituted in the 2, 4, 5 and 6 positions. The sequence is that of 3-hydroxybenzoate 4-monooxygenase (mobA) from Comamonas testosteroni (Pseudomonas testosteroni).